A 348-amino-acid chain; its full sequence is 3-isopropylmalate dehydrogenase (348 aa).

Residue 76–87 (GPKWTDPNNRPE) participates in NAD(+) binding. Residues Arg94, Arg104, Arg132, and Asp217 each contribute to the substrate site. Mg(2+)-binding residues include Asp217, Asp241, and Asp245. Position 275-287 (275-287 (GSAPDIAGKNVAN)) interacts with NAD(+).

It belongs to the isocitrate and isopropylmalate dehydrogenases family. LeuB type 1 subfamily. Homodimer. It depends on Mg(2+) as a cofactor. The cofactor is Mn(2+).

It localises to the cytoplasm. It catalyses the reaction (2R,3S)-3-isopropylmalate + NAD(+) = 4-methyl-2-oxopentanoate + CO2 + NADH. It functions in the pathway amino-acid biosynthesis; L-leucine biosynthesis; L-leucine from 3-methyl-2-oxobutanoate: step 3/4. In terms of biological role, catalyzes the oxidation of 3-carboxy-2-hydroxy-4-methylpentanoate (3-isopropylmalate) to 3-carboxy-4-methyl-2-oxopentanoate. The product decarboxylates to 4-methyl-2 oxopentanoate. The polypeptide is 3-isopropylmalate dehydrogenase (Staphylococcus aureus (strain bovine RF122 / ET3-1)).